Consider the following 103-residue polypeptide: UPF0145 protein Amet_0532 (103 aa).

It belongs to the UPF0145 family.

This chain is UPF0145 protein Amet_0532, found in Alkaliphilus metalliredigens (strain QYMF).